The following is a 438-amino-acid chain: Adenylosuccinate synthetase (438 aa).

GTP is bound by residues 13–19 (GDEGKGK) and 41–43 (GHT). The active-site Proton acceptor is Asp-14. Residues Asp-14 and Gly-41 each coordinate Mg(2+). Residues 14–17 (DEGK), 39–42 (NAGH), Thr-130, Arg-144, Gln-225, Thr-240, and Arg-310 contribute to the IMP site. His-42 functions as the Proton donor in the catalytic mechanism. Substrate is bound at residue 306-312 (ATTGRLR). GTP is bound by residues Arg-312, 338-340 (KLD), and 421-423 (STG).

It belongs to the adenylosuccinate synthetase family. Homodimer. Mg(2+) is required as a cofactor.

The protein resides in the cytoplasm. The catalysed reaction is IMP + L-aspartate + GTP = N(6)-(1,2-dicarboxyethyl)-AMP + GDP + phosphate + 2 H(+). The protein operates within purine metabolism; AMP biosynthesis via de novo pathway; AMP from IMP: step 1/2. In terms of biological role, plays an important role in the de novo pathway of purine nucleotide biosynthesis. Catalyzes the first committed step in the biosynthesis of AMP from IMP. The chain is Adenylosuccinate synthetase from Vibrio vulnificus (strain YJ016).